Here is a 485-residue protein sequence, read N- to C-terminus: Probable phosphomannomutase (485 aa).

Catalysis depends on Ser-86, which acts as the Phosphoserine intermediate. Ser-86, Asp-236, Asp-238, and Asp-240 together coordinate Mg(2+).

This sequence belongs to the phosphohexose mutase family. The cofactor is Mg(2+).

It carries out the reaction alpha-D-mannose 1-phosphate = D-mannose 6-phosphate. The sequence is that of Probable phosphomannomutase from Haemophilus influenzae (strain ATCC 51907 / DSM 11121 / KW20 / Rd).